Reading from the N-terminus, the 255-residue chain is Hydroxyacylglutathione hydrolase (255 aa).

7 residues coordinate Zn(2+): histidine 52, histidine 54, aspartate 56, histidine 57, histidine 109, aspartate 126, and histidine 166.

The protein belongs to the metallo-beta-lactamase superfamily. Glyoxalase II family. In terms of assembly, monomer. Zn(2+) serves as cofactor.

It carries out the reaction an S-(2-hydroxyacyl)glutathione + H2O = a 2-hydroxy carboxylate + glutathione + H(+). It participates in secondary metabolite metabolism; methylglyoxal degradation; (R)-lactate from methylglyoxal: step 2/2. In terms of biological role, thiolesterase that catalyzes the hydrolysis of S-D-lactoyl-glutathione to form glutathione and D-lactic acid. In Anaeromyxobacter dehalogenans (strain 2CP-C), this protein is Hydroxyacylglutathione hydrolase.